A 257-amino-acid chain; its full sequence is MLSKRIIPCLDVKDGVVVKGVQFRNHEVMGGIVELARRYASEGADELVFYDITASSDERVVDKSWVSRVAEVIDIPFCVAGGIKSVEDARQILEFGADKVSINSPALADPTLITRLAERFGVQCVVVGIDSYFDAQSGHYQVKQFTGDESRTRTTAWHTLDWVEEAQKRGAGEIVLNVMNQDGMRQGYDLEQLKLVRAVCKVPLIASGGAGAMEHFRDAFTLADVDGALAASVFHKGLIPIPELKRWLKTEGVAIRE.

Active-site residues include D11 and D130.

This sequence belongs to the HisA/HisF family. Heterodimer of HisH and HisF.

The protein localises to the cytoplasm. The catalysed reaction is 5-[(5-phospho-1-deoxy-D-ribulos-1-ylimino)methylamino]-1-(5-phospho-beta-D-ribosyl)imidazole-4-carboxamide + L-glutamine = D-erythro-1-(imidazol-4-yl)glycerol 3-phosphate + 5-amino-1-(5-phospho-beta-D-ribosyl)imidazole-4-carboxamide + L-glutamate + H(+). It participates in amino-acid biosynthesis; L-histidine biosynthesis; L-histidine from 5-phospho-alpha-D-ribose 1-diphosphate: step 5/9. Functionally, IGPS catalyzes the conversion of PRFAR and glutamine to IGP, AICAR and glutamate. The HisF subunit catalyzes the cyclization activity that produces IGP and AICAR from PRFAR using the ammonia provided by the HisH subunit. This Aeromonas hydrophila subsp. hydrophila (strain ATCC 7966 / DSM 30187 / BCRC 13018 / CCUG 14551 / JCM 1027 / KCTC 2358 / NCIMB 9240 / NCTC 8049) protein is Imidazole glycerol phosphate synthase subunit HisF.